The primary structure comprises 334 residues: MATRQRESSITSCCSTSSCDADDEGVRGTCEDASLCKRFAVSIGYWHDPYIQHFVRLSKERKAPEINRGYFARVHGVSQLIKAFLRKTECHCQIVNLGAGMDTTFWRLKDEDLLPSKYFEVDFPMIVTRKLHSIKCKPPLSSPILELHSEDTLQMDGHILDSKRYAVIGADLRDLSELEEKLKKCNMNTQLPTLLIAECVLVYMTPEQSANLLKWAANSFERAMFINYEQVNMGDRFGQIMIENLRRRQCDLAGVETCKSLESQKERLLSNGWETASAVDMMELYNRLPRAEVSRIESLEFLDEMELLEQLMRHYCLCWATKGGNELGLKEITY.

S-adenosyl-L-methionine-binding positions include Lys-37, Arg-73, Gly-98, Asp-122, 171-172, and Glu-198; that span reads DL.

Belongs to the methyltransferase superfamily. LCMT family.

It catalyses the reaction [phosphatase 2A protein]-C-terminal L-leucine + S-adenosyl-L-methionine = [phosphatase 2A protein]-C-terminal L-leucine methyl ester + S-adenosyl-L-homocysteine. Functionally, methylates the carboxyl group of the C-terminal leucine residue of protein phosphatase 2A catalytic subunits to form alpha-leucine ester residues. The polypeptide is Leucine carboxyl methyltransferase 1 (LCMT1) (Homo sapiens (Human)).